The following is a 296-amino-acid chain: GTPase Era (296 aa).

Residues K7–Y174 form the Era-type G domain. Positions G15 to S22 are G1. Position 15-22 (G15–S22) interacts with GTP. The interval Q41–V45 is G2. Positions D62–G65 are G3. Residues D62–I66 and N124–D127 each bind GTP. A G4 region spans residues N124–D127. The tract at residues I153–A155 is G5. Residues L205–E282 enclose the KH type-2 domain.

It belongs to the TRAFAC class TrmE-Era-EngA-EngB-Septin-like GTPase superfamily. Era GTPase family. As to quaternary structure, monomer.

It is found in the cytoplasm. The protein resides in the cell inner membrane. Its function is as follows. An essential GTPase that binds both GDP and GTP, with rapid nucleotide exchange. Plays a role in 16S rRNA processing and 30S ribosomal subunit biogenesis and possibly also in cell cycle regulation and energy metabolism. This Ehrlichia ruminantium (strain Gardel) protein is GTPase Era.